The primary structure comprises 74 residues: Cytochrome c oxidase assembly factor 5 (74 aa).

Positions 27 to 65 (QSDCVVQEGKSPRQCLKEGYCNSLKYAFFECKRSVLDNR) constitute a CHCH domain. Residues 30 to 41 (CVVQEGKSPRQC) carry the Cx10C motif motif. Cystine bridges form between C30-C57 and C41-C47. S37 carries the phosphoserine modification. The Cx9C motif motif lies at 47–57 (CNSLKYAFFEC).

This sequence belongs to the PET191 family.

Functionally, involved in an early step of the mitochondrial complex IV assembly process. The chain is Cytochrome c oxidase assembly factor 5 (COA5) from Homo sapiens (Human).